The following is a 233-amino-acid chain: uncharacterized protein (233 aa).

The segment covering methionine 1–leucine 10 has biased composition (basic residues). The interval methionine 1–arginine 90 is disordered. A compositionally biased stretch (basic and acidic residues) spans lysine 11–glutamate 56. Basic residues predominate over residues lysine 76–glycine 85. The region spanning valine 92–glycine 171 is the RRM domain. Composition is skewed to basic and acidic residues over residues methionine 194 to alanine 216 and isoleucine 224 to glutamine 233. The segment at methionine 194–glutamine 233 is disordered.

It localises to the nucleus. The protein localises to the nucleolus. This is an uncharacterized protein from Schizosaccharomyces pombe (strain 972 / ATCC 24843) (Fission yeast).